A 370-amino-acid chain; its full sequence is GMP synthase [glutamine-hydrolyzing] subunit B (370 aa).

In terms of domain architecture, GMPS ATP-PPase spans 3–189 (FDPQKFVDEI…LGLPRDIYNR (187 aa)). An ATP-binding site is contributed by 29–35 (SGGVDST).

As to quaternary structure, heterodimer composed of a glutamine amidotransferase subunit (A) and a GMP-binding subunit (B).

The catalysed reaction is XMP + L-glutamine + ATP + H2O = GMP + L-glutamate + AMP + diphosphate + 2 H(+). Its pathway is purine metabolism; GMP biosynthesis; GMP from XMP (L-Gln route): step 1/1. Its function is as follows. Catalyzes the synthesis of GMP from XMP. The protein is GMP synthase [glutamine-hydrolyzing] subunit B (guaAB) of Sulfurisphaera tokodaii (strain DSM 16993 / JCM 10545 / NBRC 100140 / 7) (Sulfolobus tokodaii).